A 1197-amino-acid chain; its full sequence is DNA-directed RNA polymerase subunit beta (1197 aa).

Over residues 1172-1185 (KEQEEKKAQQEAEK) the composition is skewed to basic and acidic residues. Residues 1172–1197 (KEQEEKKAQQEAEKAQAASAEDPSAE) form a disordered region. The span at 1186–1197 (AQAASAEDPSAE) shows a compositional bias: low complexity.

The protein belongs to the RNA polymerase beta chain family. As to quaternary structure, the RNAP catalytic core consists of 2 alpha, 1 beta, 1 beta' and 1 omega subunit. When a sigma factor is associated with the core the holoenzyme is formed, which can initiate transcription.

The enzyme catalyses RNA(n) + a ribonucleoside 5'-triphosphate = RNA(n+1) + diphosphate. Functionally, DNA-dependent RNA polymerase catalyzes the transcription of DNA into RNA using the four ribonucleoside triphosphates as substrates. This Latilactobacillus sakei subsp. sakei (strain 23K) (Lactobacillus sakei subsp. sakei) protein is DNA-directed RNA polymerase subunit beta.